The chain runs to 143 residues: Photosystem II extrinsic protein U (143 aa).

The first 29 residues, 1–29, serve as a signal peptide directing secretion; it reads MKRLVGVLMILGLMLTSWGLLGSPQTAIA. Positions 30–44 are excised as a propeptide; sequence ASLSPLSFNPSPVLA.

Belongs to the PsbU family. As to quaternary structure, PSII is composed of 1 copy each of membrane proteins PsbA, PsbB, PsbC, PsbD, PsbE, PsbF, PsbH, PsbI, PsbJ, PsbK, PsbL, PsbM, PsbT, PsbX, PsbY, PsbZ, Psb30/Ycf12, peripheral proteins PsbO, CyanoQ (PsbQ), PsbU, PsbV and a large number of cofactors. It forms dimeric complexes.

The protein resides in the cellular thylakoid membrane. One of the extrinsic, lumenal subunits of photosystem II (PSII). PSII is a light-driven water plastoquinone oxidoreductase, using light energy to abstract electrons from H(2)O, generating a proton gradient subsequently used for ATP formation. The extrinsic proteins stabilize the structure of photosystem II oxygen-evolving complex (OEC), the ion environment of oxygen evolution and protect the OEC against heat-induced inactivation. The protein is Photosystem II extrinsic protein U of Leptolyngbya laminosa (Phormidium laminosum).